The following is a 195-amino-acid chain: Ribonuclease HII (195 aa).

The region spanning 8-195 (WGVVGVDEAG…FAPVRRLLGG (188 aa)) is the RNase H type-2 domain. A divalent metal cation contacts are provided by Asp-14, Glu-15, and Asp-106.

This sequence belongs to the RNase HII family. Requires Mn(2+) as cofactor. It depends on Mg(2+) as a cofactor.

It localises to the cytoplasm. It catalyses the reaction Endonucleolytic cleavage to 5'-phosphomonoester.. Functionally, endonuclease that specifically degrades the RNA of RNA-DNA hybrids. The sequence is that of Ribonuclease HII from Halorhodospira halophila (strain DSM 244 / SL1) (Ectothiorhodospira halophila (strain DSM 244 / SL1)).